Consider the following 256-residue polypeptide: Thiazole synthase (256 aa).

The active-site Schiff-base intermediate with DXP is Lys-95. Residues Gly-156, 182–183 (AG), and 204–205 (NT) each bind 1-deoxy-D-xylulose 5-phosphate.

Belongs to the ThiG family. Homotetramer. Forms heterodimers with either ThiH or ThiS.

It is found in the cytoplasm. It catalyses the reaction [ThiS sulfur-carrier protein]-C-terminal-Gly-aminoethanethioate + 2-iminoacetate + 1-deoxy-D-xylulose 5-phosphate = [ThiS sulfur-carrier protein]-C-terminal Gly-Gly + 2-[(2R,5Z)-2-carboxy-4-methylthiazol-5(2H)-ylidene]ethyl phosphate + 2 H2O + H(+). It functions in the pathway cofactor biosynthesis; thiamine diphosphate biosynthesis. Its function is as follows. Catalyzes the rearrangement of 1-deoxy-D-xylulose 5-phosphate (DXP) to produce the thiazole phosphate moiety of thiamine. Sulfur is provided by the thiocarboxylate moiety of the carrier protein ThiS. In vitro, sulfur can be provided by H(2)S. The polypeptide is Thiazole synthase (Klebsiella pneumoniae (strain 342)).